The sequence spans 67 residues: Small ribosomal subunit protein eS17 (67 aa).

It belongs to the eukaryotic ribosomal protein eS17 family.

This Pyrococcus abyssi (strain GE5 / Orsay) protein is Small ribosomal subunit protein eS17.